Consider the following 106-residue polypeptide: uncharacterized protein (106 aa).

Disordered regions lie at residues 27 to 47 and 83 to 106; these read FSDSEDEPDDEASSSDKDVSD and SPAMLPRPAYRGIEREDRGGVQSK. A compositionally biased stretch (acidic residues) spans 29–39; the sequence is DSEDEPDDEAS. Residues 94-106 are compositionally biased toward basic and acidic residues; the sequence is GIEREDRGGVQSK.

The protein localises to the mitochondrion. This is an uncharacterized protein from Arabidopsis thaliana (Mouse-ear cress).